The sequence spans 622 residues: Transcription factor SKN7 (622 aa).

Polar residues predominate over residues 1–12 (MSFSTINSNVNK). Residues 1-29 (MSFSTINSNVNKTTGDSNNNTTENSSTAD) form a disordered region. Low complexity predominate over residues 13-27 (TTGDSNNNTTENSST). The segment at 84–190 (ANEFVRKLFR…GLDNIKRKIP (107 aa)) is DNA-binding domain. Residues 212–303 (TNPNNPSGSL…NNFNTLCSTL (92 aa)) form a hydrophobic repeat HR-A/B region. Residues 240-260 (FGNLRRRVDKLQKELDMSKME) adopt a coiled-coil conformation. The region spanning 378–492 (HVLLVEDDAV…DLHSILIRYL (115 aa)) is the Response regulatory domain. Asp-427 is modified (4-aspartylphosphate). 2 disordered regions span residues 501–579 (QQLP…QHHN) and 599–622 (TVPH…NQLS). A compositionally biased stretch (low complexity) spans 512–527 (THSNTNTANSNPNTIN). Positions 537–554 (DNPSTTTPVTPGASISSA) are enriched in polar residues. Residues 555 to 578 (QHVQQGQQEQQHQIFHAQQQQQHH) are compositionally biased toward low complexity. Residues 600 to 622 (VPHSSMGSTPQLPQSTLQENQLS) show a composition bias toward polar residues.

The protein belongs to the SKN7 family. Homotrimer. Post-translationally, the phosphorelay mechanism involves the sequential transfer of a phosphate group from 'His-576' (H1) to 'Asp-1144' (D1) of SLN1, then to 'His-64' (H2) of YPD1 and finally to Asp-427 (D2) of SKN7.

Its subcellular location is the nucleus. Transcription factor that is part of a SLN1-YPD1-SKN7 two-component regulatory system, which controls gene expression in response to changes in the osmolarity of the extracellular environment. Under low osmotic conditions, phosphorylated and activated by the phosphorelay intermediate protein YPD1. Also activated in response to oxidative stress, independent on the two-component regulatory system. Regulates heat shock genes in response to oxidative stress and genes involved in cell wall integrity in response to osmotic changes. In Saccharomyces cerevisiae (strain ATCC 204508 / S288c) (Baker's yeast), this protein is Transcription factor SKN7 (SKN7).